Consider the following 87-residue polypeptide: MRHKPTPPKGNKSLGNALASKKKVSKNQVVFFDYRDERKLKRFINDQGKIIPRRITGLSAKEQNLLTHSVKWARFLAVIPYVTDEYK.

The tract at residues 1 to 21 (MRHKPTPPKGNKSLGNALASK) is disordered.

This sequence belongs to the bacterial ribosomal protein bS18 family. Part of the 30S ribosomal subunit. Forms a tight heterodimer with protein bS6.

Functionally, binds as a heterodimer with protein bS6 to the central domain of the 16S rRNA, where it helps stabilize the platform of the 30S subunit. This is Small ribosomal subunit protein bS18 from Chlorobium phaeobacteroides (strain DSM 266 / SMG 266 / 2430).